The sequence spans 81 residues: RNA-binding protein Hfq (81 aa).

Residues 11–71 (DIFLNNARKN…ISTITPTKPI (61 aa)) form the Sm domain.

It belongs to the Hfq family. Homohexamer.

Functionally, RNA chaperone that binds small regulatory RNA (sRNAs) and mRNAs to facilitate mRNA translational regulation in response to envelope stress, environmental stress and changes in metabolite concentrations. Also binds with high specificity to tRNAs. The protein is RNA-binding protein Hfq of Clostridium beijerinckii (strain ATCC 51743 / NCIMB 8052) (Clostridium acetobutylicum).